A 588-amino-acid chain; its full sequence is MDSSVSTEPLSKNALKREKKAKEKEQLEQEKKAAAVAKRQMEQHNLPENDDLDPTQYLANRLRNIESLRESGINPYPHKFFITMSIPEFISRYAHLNTGEFPEDIDMSLAGRVISKRASSSKLYFYELLGGGARVQVLASARDSDVDAVQFSNYQSGVKRGDIIGVRGYPGKSKRGELSIFAKPFIVLAPCLHMLPRRLTSSIVDETRTQNFQGITAYDTWTPGDLRNPESYVLRDQETRYRQRYLDLMMNPEVRALFRTRARIISYIRSFLDNLEFLEVETPSMNLTAGGASARPFITHHNELDTELLIRVSPELYLKKLVVGGFDRVYELGKHFRNEGMDLTHSPEFTMCELYMAYADYNDLMDLTEQLLSGMVKDLTGSYKIRYHANGLDNEPIEIDFTPPFRKIDMLSELEKVANISIPRDLSSESANKHLVDVCEKFDVKCPPPHTTTRLLDKLVGHFIEVNCINPTFIINHPEIMSPLAKSRRSEPGLTERFNLFVNRRELCDAYTELNDPTAQRERFAEQLKDRQLGDDEAMDLDESFITALEYGLPPTGGLGMGIDRLTMLLTDSQNVKEVILFPAMRLQ.

Over residues 1–10 (MDSSVSTEPL) the composition is skewed to polar residues. The tract at residues 1–54 (MDSSVSTEPLSKNALKREKKAKEKEQLEQEKKAAAVAKRQMEQHNLPENDDLDP) is disordered. Residues 20-47 (KAKEKEQLEQEKKAAAVAKRQMEQHNLP) are compositionally biased toward basic and acidic residues.

Belongs to the class-II aminoacyl-tRNA synthetase family.

The protein resides in the cytoplasm. The enzyme catalyses tRNA(Lys) + L-lysine + ATP = L-lysyl-tRNA(Lys) + AMP + diphosphate. This Solanum lycopersicum (Tomato) protein is Lysine--tRNA ligase (LYSRS).